A 479-amino-acid chain; its full sequence is Serralysin C (479 aa).

Positions 1 to 17 (MGKNLSLRQDDAQHALS) are excised as a propeptide. Residue His-188 participates in Zn(2+) binding. Glu-189 is a catalytic residue. The Zn(2+) site is built by His-192 and Tyr-228. Positions 265, 267, 297, 299, 300, 302, 339, 341, 346, 348, 350, 355, 357, 359, 363, 364, 365, 366, 368, 372, 373, 375, 377, 381, 382, 383, 384, 386, 395, 402, and 412 each coordinate Ca(2+). Hemolysin-type calcium-binding repeat units follow at residues 344 to 361 (IGGS…DNIL), 362 to 379 (QGGA…ADTL), and 380 to 397 (YGGA…QDST).

This sequence belongs to the peptidase M10B family. Ca(2+) is required as a cofactor. It depends on Zn(2+) as a cofactor.

It is found in the secreted. It carries out the reaction Preferential cleavage of bonds with hydrophobic residues in P1'.. The sequence is that of Serralysin C (prtC) from Dickeya chrysanthemi (Pectobacterium chrysanthemi).